A 670-amino-acid chain; its full sequence is Transcriptional regulatory protein DOT6 (670 aa).

The segment covering 1–44 has biased composition (polar residues); the sequence is MSISTSLNSASIHLSSMDTHPQLHSLTRQPHSSSTAMSKNEAQE. The interval 1-78 is disordered; sequence MSISTSLNSA…SKNPSSWDPQ (78 aa). Positions 45-74 are enriched in low complexity; sequence SSPSLPASSSSSTSASASASSKNSSKNPSS. Residues 67 to 121 form the HTH myb-type domain; it reads NSSKNPSSWDPQDDLLLRHLKEVKKMGWKDISQYFPNRTPNACQFRWRRLKSGNL. Positions 94–117 form a DNA-binding region, H-T-H motif; the sequence is WKDISQYFPNRTPNACQFRWRRLK. The span at 226 to 242 shows a compositional bias: basic residues; that stretch reads HHPHQHLHHHPHHKTLK. Disordered regions lie at residues 226-250, 293-332, 406-436, and 483-659; these read HHPH…SHSF, TTPS…NTSR, HSSS…CNPT, and ADML…NSPL. A phosphoserine mark is found at S245 and S247. Low complexity-rich tracts occupy residues 295 to 307 and 316 to 332; these read PSSP…LLSS and NWSR…NTSR. A compositionally biased stretch (polar residues) spans 425–436; the sequence is SGHSMKSSCNPT. S487 carries the phosphoserine modification. Residue T489 is modified to Phosphothreonine. S491 bears the Phosphoserine mark. Positions 512–522 are enriched in basic and acidic residues; that stretch reads DDDKGSDKEDV. Low complexity-rich tracts occupy residues 544-561 and 587-598; these read SSNK…SSKD and TITSDTSSSAAT. The segment covering 599-608 has biased composition (polar residues); the sequence is MNRTPNSKNP. Over residues 622-659 the composition is skewed to low complexity; sequence ITPRPKPSSTTTSITTETTNNMINHSSSTTTTTNNSPL.

The protein belongs to the DOT6 family. Component of the RPD3C(L) complex composed of at least ASH1, CTI6, DEP1, DOT6, PHO23, RPD3, RXT2, RXT3, SAP30, SDS3, SIN3, TOD6; UME1 and UME6.

It is found in the nucleus. Functionally, component of the RPD3 histone deacetylase complex RPD3C(L) responsible for the deacetylation of lysine residues on the N-terminal part of the core histones (H2A, H2B, H3 and H4). Histone deacetylation gives a tag for epigenetic repression and plays an important role in transcriptional regulation, cell cycle progression and developmental events. DOT6 binds to sequences containing the core CGATG, which resembles the PAC (Polymerase A and C) motif. This is Transcriptional regulatory protein DOT6 (DOT6) from Saccharomyces cerevisiae (strain ATCC 204508 / S288c) (Baker's yeast).